Consider the following 96-residue polypeptide: MSRVCELSGKAPMTGNTVSHANNKSRRRFLPNLNDVTLISDVLGQSFKLRISAAALRTVDHRGGLDAFLAKARDEELSLKALAIKKEIEKVRATAA.

Residues 1–23 (MSRVCELSGKAPMTGNTVSHANN) are disordered.

This sequence belongs to the bacterial ribosomal protein bL28 family.

The sequence is that of Large ribosomal subunit protein bL28 from Cereibacter sphaeroides (strain ATCC 17025 / ATH 2.4.3) (Rhodobacter sphaeroides).